A 602-amino-acid chain; its full sequence is Transcription termination factor Rho (602 aa).

Disordered regions lie at residues 1 to 35 and 76 to 216; these read MTDT…EPAG and ANGA…AEAE. Residues 85–96 show a composition bias toward basic and acidic residues; the sequence is SAQEHDKGDRPP. Positions 100–120 are enriched in polar residues; the sequence is APATQGEQTPTEQIDSQSQQV. Low complexity predominate over residues 172–182; sequence GDQQASGGQQA. Residues 183-192 show a composition bias toward basic and acidic residues; that stretch reads RGDEDGEARQ. Residues 193–206 are compositionally biased toward basic residues; sequence GRRGRRFRDRRRRG. Positions 223-301 constitute a Rho RNA-BD domain; the sequence is VQPVAGILDV…VRLDSINGGS (79 aa). ATP contacts are provided by residues 344 to 349, 356 to 361, and Arg387; these read GKGQRA and KAGKTT.

Belongs to the Rho family. In terms of assembly, homohexamer. The homohexamer assembles into an open ring structure.

Its function is as follows. Facilitates transcription termination by a mechanism that involves Rho binding to the nascent RNA, activation of Rho's RNA-dependent ATPase activity, and release of the mRNA from the DNA template. The polypeptide is Transcription termination factor Rho (Mycobacterium bovis (strain ATCC BAA-935 / AF2122/97)).